A 103-amino-acid polypeptide reads, in one-letter code: Cell division protein FtsB (103 aa).

Topologically, residues 1 to 3 are cytoplasmic; the sequence is MGK. A helical transmembrane segment spans residues 4 to 21; it reads LTLLLLALLVWLQYSLWF. Over 22–103 the chain is Periplasmic; it reads GKNGIHDYSR…RAATAGQTHR (82 aa). A coiled-coil region spans residues 33-62; sequence NDDVVAQQATNAKLKARNDQLFAEIDDLNG.

Belongs to the FtsB family. Part of a complex composed of FtsB, FtsL and FtsQ.

The protein resides in the cell inner membrane. In terms of biological role, essential cell division protein. May link together the upstream cell division proteins, which are predominantly cytoplasmic, with the downstream cell division proteins, which are predominantly periplasmic. This is Cell division protein FtsB from Salmonella agona (strain SL483).